We begin with the raw amino-acid sequence, 402 residues long: Deoxyguanosinetriphosphate triphosphohydrolase-like protein (402 aa).

Positions 69 to 217 (RLTHSLEVAQ…AAIADDIAYD (149 aa)) constitute an HD domain.

Belongs to the dGTPase family. Type 2 subfamily.

In Bradyrhizobium diazoefficiens (strain JCM 10833 / BCRC 13528 / IAM 13628 / NBRC 14792 / USDA 110), this protein is Deoxyguanosinetriphosphate triphosphohydrolase-like protein.